A 368-amino-acid chain; its full sequence is Peptide chain release factor 2 (368 aa).

Glutamine 250 is subject to N5-methylglutamine.

Belongs to the prokaryotic/mitochondrial release factor family. Post-translationally, methylated by PrmC. Methylation increases the termination efficiency of RF2.

Its subcellular location is the cytoplasm. Its function is as follows. Peptide chain release factor 2 directs the termination of translation in response to the peptide chain termination codons UGA and UAA. This Rickettsia africae (strain ESF-5) protein is Peptide chain release factor 2.